A 491-amino-acid chain; its full sequence is Cobyric acid synthase (491 aa).

A GATase cobBQ-type domain is found at 250 to 439 (ELNIIVIRLP…LHGIFDNGSW (190 aa)). Catalysis depends on C331, which acts as the Nucleophile. The active site involves H431.

This sequence belongs to the CobB/CobQ family. CobQ subfamily.

The protein operates within cofactor biosynthesis; adenosylcobalamin biosynthesis. In terms of biological role, catalyzes amidations at positions B, D, E, and G on adenosylcobyrinic A,C-diamide. NH(2) groups are provided by glutamine, and one molecule of ATP is hydrogenolyzed for each amidation. This chain is Cobyric acid synthase, found in Microcystis aeruginosa (strain NIES-843 / IAM M-2473).